Reading from the N-terminus, the 346-residue chain is fMet-Leu-Phe receptor (346 aa).

N-linked (GlcNAc...) asparagine glycosylation is found at asparagine 1 and asparagine 7. Residues 1–24 are Extracellular-facing; sequence NSSLPTNISGGTPAVSAGYLFLDI. The helical transmembrane segment at 25–47 threads the bilayer; it reads ITYLVFAVTFVLGVLGNGLVIWV. The Cytoplasmic portion of the chain corresponds to 48–58; that stretch reads AGFRMRHTVTT. The helical transmembrane segment at 59-80 threads the bilayer; sequence ISYLNLAVADFCFTSTLPFLMV. The Extracellular portion of the chain corresponds to 81-97; the sequence is VKVMRGHWPFGWFLCKF. Cysteine 95 and cysteine 173 form a disulfide bridge. A helical membrane pass occupies residues 98–118; it reads IFTIVDINLFGSVFLIALIAL. Residues 119-137 are Cytoplasmic-facing; that stretch reads DRCVCVLHPVWTQNHRTVS. The chain crosses the membrane as a helical span at residues 138–159; sequence LAKKVIIGPWVMALLLTLPVII. Over 160 to 202 the chain is Extracellular; sequence RVTTVPGKTGTVACTFDFSPWTNDPVEKLKVTIAMLTVRGIIR. Residues 203-223 traverse the membrane as a helical segment; that stretch reads FIIGFSVPMSIVAVSYGLIAT. Over 224–239 the chain is Cytoplasmic; it reads KIHKQGLIKSSRPLRV. A helical transmembrane segment spans residues 240 to 263; that stretch reads LSFVVAAFFLCWSPYQVVAFIATV. Over 264–282 the chain is Extracellular; sequence RLRNILQGLSKELRIAVDA. A helical transmembrane segment spans residues 283–302; sequence TSALAFFNSCLNPMLYVFMG. Residues 303–346 are Cytoplasmic-facing; sequence QDFRERLIHSLPTSLERALTEDSAQTSDTATNSTLPSAEVPLQA. The disordered stretch occupies residues 321 to 346; sequence LTEDSAQTSDTATNSTLPSAEVPLQA. Residues 324–338 are compositionally biased toward polar residues; sequence DSAQTSDTATNSTLP.

The protein belongs to the G-protein coupled receptor 1 family. Post-translationally, phosphorylated; which is necessary for desensitization.

It localises to the cell membrane. High affinity receptor for N-formyl-methionyl peptides (fMLP), which are powerful neutrophil chemotactic factors. Binding of fMLP to the receptor stimulates intracellular calcium mobilization and superoxide anion release. This response is mediated via a G-protein that activates a phosphatidylinositol-calcium second messenger system. Receptor for TAFA4, mediates its effects on chemoattracting macrophages, promoting phagocytosis and increasing ROS release. Receptor for cathepsin CTSG, leading to increased phagocyte chemotaxis. The sequence is that of fMet-Leu-Phe receptor (FPR1) from Macaca mulatta (Rhesus macaque).